The sequence spans 620 residues: MIKKIISVFLLLACIITSAFTAFFYHSKLSDQTKSISSLSSQQAQERLQSYQDSLDFYKKLNISLSVAIANSLRDKAVEELNAIALRIQENHGFIGVTFASLDGTMFTDIGTLDWNAKTLRRDWFVKTVELGTKHYTAFDIDKTTGQHVLTIATPVYVGNDIVGSVALDIAGDQIASPNGSGMFMMTDRNFNVFASDLTHSTLIGKDLTKEKPLFKNLVSGQYVTFSDADSHWFAVSQTEIDGENKLFTIIDIQQIVQTYKRDIQLIIAGFSGFSCVMLIGLYWVLSKELSGVRQIREWILSLSDGQIKERRPIKFHNELDTIAQSLENLQFRLLDVVRNSHRTMNDLSIKQTDITYSIEGNTNNSQQELGLIEQVATATTQLSCTSFDVMQQAQSAELNAETAQKLIAESHDIIDSSSKQTEMVTLSIHESQQIINQLREFSDNISSVTDVINNISDQTNLLALNAAIEAARAGEQGRGFAVVADEVRSLAVKTQQSTIDIQGIILKLQEQSQLADQVMTRNVSLIHETQVANRALIASFNLISDKVLEISNINSIVSTAANEQKIVTEDVAKQMEDIRYLVQENLSAMERTKQANQNISDLTTNLNDALSFFKIELTS.

The Methyl-accepting transducer domain maps to 344–580; sequence TMNDLSIKQT…DVAKQMEDIR (237 aa).

The protein belongs to the methyl-accepting chemotaxis (MCP) protein family.

The protein resides in the cell inner membrane. May function as an environmental regulator of TCP biogenesis. Negatively regulates the synthesis of the major pilin subunit of TCP (TcpA). The sequence is that of Toxin coregulated pilus biosynthesis protein I (tcpI) from Vibrio cholerae serotype O1 (strain ATCC 39541 / Classical Ogawa 395 / O395).